Reading from the N-terminus, the 220-residue chain is Nucleolar protein 12 (220 aa).

Positions 31-86 form a coiled coil; the sequence is HKRKMQRRKTAVEEIKRKIKEEQKKMKEERHKEYMKMLKEREEALCELEENDELEE. The tract at residues 109–220 is disordered; it reads ISDLDLSGIR…QTGKTRRRRN (112 aa). Residues 139–148 are compositionally biased toward basic and acidic residues; sequence EKGADEEKPK. 2 stretches are compositionally biased toward basic residues: residues 176-186 and 205-220; these read RSQRKSGKRPS and KTQR…RRRN.

It belongs to the RRP17 family.

It is found in the nucleus. The protein resides in the nucleolus. In terms of biological role, may bind to rRNA. The polypeptide is Nucleolar protein 12 (nol12) (Xenopus laevis (African clawed frog)).